The sequence spans 443 residues: UDP-N-acetylmuramate--L-alanine ligase (443 aa).

110–116 contacts ATP; it reads GAHGKTS.

This sequence belongs to the MurCDEF family.

The protein resides in the cytoplasm. It carries out the reaction UDP-N-acetyl-alpha-D-muramate + L-alanine + ATP = UDP-N-acetyl-alpha-D-muramoyl-L-alanine + ADP + phosphate + H(+). Its pathway is cell wall biogenesis; peptidoglycan biosynthesis. Cell wall formation. The sequence is that of UDP-N-acetylmuramate--L-alanine ligase from Streptococcus equi subsp. equi (strain 4047).